The chain runs to 94 residues: Integration host factor subunit beta (94 aa).

This sequence belongs to the bacterial histone-like protein family. In terms of assembly, heterodimer of an alpha and a beta chain.

In terms of biological role, this protein is one of the two subunits of integration host factor, a specific DNA-binding protein that functions in genetic recombination as well as in transcriptional and translational control. This is Integration host factor subunit beta from Vibrio atlanticus (strain LGP32) (Vibrio splendidus (strain Mel32)).